The chain runs to 98 residues: NADH-ubiquinone oxidoreductase chain 4L (98 aa).

Helical transmembrane passes span 2-22 (TPIF…TLIF), 29-49 (SLLC…LIIL), and 61-81 (ILLL…LVMV).

Belongs to the complex I subunit 4L family. Core subunit of respiratory chain NADH dehydrogenase (Complex I) which is composed of 45 different subunits.

Its subcellular location is the mitochondrion inner membrane. It catalyses the reaction a ubiquinone + NADH + 5 H(+)(in) = a ubiquinol + NAD(+) + 4 H(+)(out). In terms of biological role, core subunit of the mitochondrial membrane respiratory chain NADH dehydrogenase (Complex I) which catalyzes electron transfer from NADH through the respiratory chain, using ubiquinone as an electron acceptor. Part of the enzyme membrane arm which is embedded in the lipid bilayer and involved in proton translocation. The chain is NADH-ubiquinone oxidoreductase chain 4L (MT-ND4L) from Avahi cleesei (Cleese's woolly lemur).